We begin with the raw amino-acid sequence, 436 residues long: AP-2 complex subunit mu-B (436 aa).

Residues 170 to 435 (RNELFLDVLE…IGRSGIYETR (266 aa)) enclose the MHD domain. Residues Lys-342, Lys-346, and Lys-355 each contribute to the a 1,2-diacyl-sn-glycero-3-phospho-(1D-myo-inositol-3,4,5-trisphosphate) site.

It belongs to the adaptor complexes medium subunit family. Adaptor protein complex 2 (AP-2) is a heterotetramer composed of two large adaptins (alpha-type subunit and beta-type subunit), a medium adaptin (mu-type subunit) and a small adaptin (sigma-type subunit).

Its subcellular location is the cell membrane. It is found in the membrane. The protein resides in the coated pit. In terms of biological role, component of the adaptor complexes which link clathrin to receptors in coated vesicles. Clathrin-associated protein complexes are believed to interact with the cytoplasmic tails of membrane proteins, leading to their selection and concentration. AP50 is a subunit of the plasma membrane adaptor. The complex binds polyphosphoinositide-containing lipids. The protein is AP-2 complex subunit mu-B (ap2m1b) of Danio rerio (Zebrafish).